Reading from the N-terminus, the 566-residue chain is MDLHRAAFKMENSSYLPNPLASPALMVLASTAEASRDASIPCQQPRPFGVPVSVDKDVHIPFTNGSYTFASMYHRQGGVPGTFANRDFPPSLLHLHPQFAPPNLDCTPISMLNHSGVGAFRPFASTEDRESYQSAFTPAKRLKNCHDTESPHLRFSDADGKEYDFGTQLPSSSPGSLKVDDTGKKIFAVSGLISDREASSSPEDRNDRCKKKAAALFDSQAPICPICQVLLRPSELQEHMEQELEQLAQLPASKNSLLKDAMAPGTPKSLLLSASIKREGESPTASPHSSATDDLHHSDRYQTFLRVRANRQTRLNARIGKMKRRKQDEGQREGSCMAEDDAADIEHENSNRFEEYEWCGQKRIRATTLLEGGFRGSGFVMCSGKENPDSDADLDVDGDDTLEYGKPQYTEADVIPCTGEEPGEAKEREALRGAVLNGGPPSTRITPEFSKWASDEMPSTSNGESSKQEAMQKTCKNSDIEKITEDSAVTTFEALKARVRELERQLSRGDRYKCLICMDSYSMPLTSIQCWHVHCEECWLRTLGAKKLCPQCYTITAPGDLRRIYL.

Lysine 277 is covalently cross-linked (Glycyl lysine isopeptide (Lys-Gly) (interchain with G-Cter in SUMO2)). Residues 277–297 (KREGESPTASPHSSATDDLHH) are disordered. Serine 390 is modified (phosphoserine). The stretch at 485 to 513 (EDSAVTTFEALKARVRELERQLSRGDRYK) forms a coiled coil. The interval 514–522 (CLICMDSYS) is required for targeting to the cytoplasm. The RING-type zinc finger occupies 514 to 553 (CLICMDSYSMPLTSIQCWHVHCEECWLRTLGAKKLCPQCY).

Interacts with SIN3B. Interacts with CTNNB1 (via Armadillo repeats 2-8). Interacts with USP7 (via MATH domain). Post-translationally, auto-ubiquitinated; leads to proteasomal degradation.

Its subcellular location is the cytoplasm. The enzyme catalyses S-ubiquitinyl-[E2 ubiquitin-conjugating enzyme]-L-cysteine + [acceptor protein]-L-lysine = [E2 ubiquitin-conjugating enzyme]-L-cysteine + N(6)-ubiquitinyl-[acceptor protein]-L-lysine.. It functions in the pathway protein modification; protein ubiquitination. Functionally, E3 ubiquitin-protein ligase that promotes the ubiquitination and proteasomal degradation of SIN3B. Independently of its E3 ligase activity, acts as a CTNNB1 stabilizer through USP7-mediated deubiquitination of CTNNB1 promoting Wnt signaling. This Bos taurus (Bovine) protein is E3 ubiquitin-protein ligase RNF220 (RNF220).